A 604-amino-acid polypeptide reads, in one-letter code: Prostaglandin G/H synthase 2 (604 aa).

The N-terminal stretch at 1-17 (MLARALLLCAVLALSHT) is a signal peptide. Positions 18–55 (ANPCCSHPCQNRGVCMSVGFDQYKCDCTRTGFYGENCS) constitute an EGF-like domain. 4 disulfides stabilise this stretch: cysteine 21–cysteine 32, cysteine 22–cysteine 145, cysteine 26–cysteine 42, and cysteine 44–cysteine 54. Asparagine 53 is a glycosylation site (N-linked (GlcNAc...) asparagine). A substrate-binding site is contributed by arginine 106. N-linked (GlcNAc...) asparagine glycosylation occurs at asparagine 130. Catalysis depends on histidine 193, which acts as the Proton acceptor. Tyrosine 341 contributes to the substrate binding site. Tyrosine 371 (for cyclooxygenase activity) is an active-site residue. Histidine 374 is a heme b binding site. Asparagine 396 carries an N-linked (GlcNAc...) asparagine glycan. Residue cysteine 526 is modified to S-nitrosocysteine. A disulfide bond links cysteine 555 and cysteine 561. Serine 565 is subject to O-acetylserine. An N-linked (GlcNAc...) asparagine glycan is attached at asparagine 580.

It belongs to the prostaglandin G/H synthase family. In terms of assembly, homodimer. It depends on heme b as a cofactor. Post-translationally, S-nitrosylation by NOS2 (iNOS) activates enzyme activity. S-nitrosylation may take place on different Cys residues in addition to Cys-526. In terms of processing, acetylated at Ser-565 by SPHK1. During neuroinflammation, acetylation by SPHK1 promotes neuronal secretion of specialized preresolving mediators (SPMs), especially 15-R-lipoxin A4, which results in an increase of phagocytic microglia.

Its subcellular location is the microsome membrane. The protein resides in the endoplasmic reticulum membrane. The protein localises to the nucleus inner membrane. It is found in the nucleus outer membrane. It catalyses the reaction (5Z,8Z,11Z,14Z)-eicosatetraenoate + AH2 + 2 O2 = prostaglandin H2 + A + H2O. It carries out the reaction (5Z,8Z,11Z,14Z)-eicosatetraenoate + 2 O2 = prostaglandin G2. The catalysed reaction is prostaglandin G2 + AH2 = prostaglandin H2 + A + H2O. The enzyme catalyses (5Z,8Z,11Z,14Z,17Z)-eicosapentaenoate + 2 O2 = prostaglandin G3. It catalyses the reaction prostaglandin G3 + AH2 = prostaglandin H3 + A + H2O. It carries out the reaction (8Z,11Z,14Z)-eicosatrienoate + 2 O2 = prostaglandin G1. The catalysed reaction is prostaglandin G1 + AH2 = prostaglandin H1 + A + H2O. The enzyme catalyses 2-(5Z,8Z,11Z,14Z)-eicosatetraenoyl-sn-glycero-3-phosphoethanolamine + 2 O2 = 2-(prostaglandin G2)-sn-glycero-3-phosphoethanolamine. It catalyses the reaction 2-(prostaglandin G2)-sn-glycero-3-phosphoethanolamine + AH2 = 2-(prostaglandin H2)-sn-glycero-3-phosphoethanolamine + A + H2O. It carries out the reaction 2-(5Z,8Z,11Z,14Z)-eicosatetraenoyl-sn-glycero-3-phosphocholine + 2 O2 = 2-(prostaglandin G2)-sn-glycero-3-phosphocholine. The catalysed reaction is 2-(prostaglandin G2)-sn-glycero-3-phosphocholine + AH2 = 2-(prostaglandin H2)-sn-glycero-3-phosphocholine + A + H2O. The enzyme catalyses (15S)-hydroperoxy-(5Z,8Z,11Z,13E)-eicosatetraenoate + AH2 = (15S)-hydroxy-(5Z,8Z,11Z,13E)-eicosatetraenoate + A + H2O. It catalyses the reaction 2-(5Z,8Z,11Z,14Z)-eicosatetraenoyl-sn-glycero-3-phosphocholine + AH2 + O2 = 2-[(15S)-hydroxy-(5Z,8Z,11Z,13E)-eicosatetraenoyl]-sn-glycero-3-phosphocholine + A + H2O. It carries out the reaction 2-(5Z,8Z,11Z,14Z)-eicosatetraenoyl-sn-glycero-3-phosphocholine + AH2 + O2 = 2-[(15R)-hydroxy-(5Z,8Z,11Z,13E)-eicosatetraenoyl]-sn-glycero-3-phosphocholine + A + H2O. The catalysed reaction is 2-(5Z,8Z,11Z,14Z)-eicosatetraenoyl-sn-glycero-3-phosphocholine + AH2 + O2 = 2-[(11R)-hydroxy-(5Z,8Z,12E,14Z)-eicosatetraenoyl]-sn-glycero-3-phosphocholine + A + H2O. The enzyme catalyses (9Z,12Z)-octadecadienoate + AH2 + O2 = 9-hydroxy-(10E,12Z)-octadecadienoate + A + H2O. It catalyses the reaction (9Z,12Z)-octadecadienoate + AH2 + O2 = 13-hydroxy-(9Z,11E)-octadecadienoate + A + H2O. It carries out the reaction (5Z,8Z,11Z,14Z)-eicosatetraenoate + AH2 + O2 = (15R)-hydroxy-(5Z,8Z,11Z,13E)-eicosatetraenoate + A + H2O. The catalysed reaction is (5Z,8Z,11Z,14Z)-eicosatetraenoate + AH2 + O2 = (11R)-hydroxy-(5Z,8Z,12E,14Z)-eicosatetraenoate + A + H2O. The enzyme catalyses (5Z,8Z,11Z,14Z,17Z)-eicosapentaenoate + AH2 + O2 = (11R)-hydroxy-(5Z,8Z,12E,14Z,17Z)-eicosapentaenoate + A + H2O. It catalyses the reaction (5Z,8Z,11Z,14Z,17Z)-eicosapentaenoate + AH2 + O2 = (18S)-hydroxy-(5Z,8Z,11Z,14Z,16E)-eicosapentaenoate + A + H2O. It carries out the reaction (5Z,8Z,11Z,14Z,17Z)-eicosapentaenoate + AH2 + O2 = (18R)-hydroxy-(5Z,8Z,11Z,14Z,16E)-eicosapentaenoate + A + H2O. The catalysed reaction is (5Z,8Z,11Z,14Z,17Z)-eicosapentaenoate + AH2 + O2 = (15R)-hydroxy-(5Z,8Z,11Z,13E,17Z)-eicosapentaenoate + A + H2O. The enzyme catalyses (5Z,8Z,11Z,14Z,17Z)-eicosapentaenoate + AH2 + O2 = (15S)-hydroxy-(5Z,8Z,11Z,13E,17Z)-eicosapentaenoate + A + H2O. It catalyses the reaction (7Z,10Z,13Z,16Z,19Z)-docosapentaenoate + AH2 + O2 = 13R-hydroxy-(7Z,10Z,14E,16Z,19Z)-docosapentaenoate + A + H2O. It carries out the reaction (4Z,7Z,10Z,13Z,16Z,19Z)-docosahexaenoate + AH2 + O2 = 13-hydroxy-(4Z,7Z,10Z,14E,16Z,19Z)-docosahexaenoate + A + H2O. The catalysed reaction is (5S)-hydroxy-(6E,8Z,11Z,14Z)-eicosatetraenoate + AH2 + O2 = (5S,15R)-dihydroxy-(6E,8Z,11Z,13E)-eicosatetraenoate + A + H2O. The enzyme catalyses (4Z,7Z,10Z,13Z,16Z,19Z)-docosahexaenoate + AH2 + O2 = 17R-hydroxy-(4Z,7Z,10Z,13Z,15E,19Z)-docosahexaenoate + A + H2O. It catalyses the reaction (5S)-hydroxy-(6E,8Z,11Z,14Z)-eicosatetraenoate + AH2 + O2 = (5S,15S)-dihydroxy-(6E,8Z,11Z,13E)-eicosatetraenoate + A + H2O. It carries out the reaction (5S)-hydroxy-(6E,8Z,11Z,14Z)-eicosatetraenoate + AH2 + O2 = (5S,11R)-dihydroxy-(6E,8Z,12E,14Z)-eicosatetraenoate + A + H2O. The catalysed reaction is 2-(5Z,8Z,11Z,14Z-eicosatetraenoyl)-glycerol + 2 O2 = 2-glyceryl-prostaglandin G2. The enzyme catalyses 2-glyceryl-prostaglandin G2 + AH2 = 2-glyceryl-prostaglandin H2 + A + H2O. It catalyses the reaction (5Z,8Z,11Z,14Z)-eicosatetraenoate + O2 = (15R)-hydroperoxy-(5Z,8Z,11Z,13E)-eicosatetraenoate. It carries out the reaction (5Z,8Z,11Z,14Z)-eicosatetraenoate + O2 = 11R-hydroperoxy-(5Z,8Z,12E,14Z)-eicosatetraenoate. The catalysed reaction is (9Z,12Z)-octadecadienoate + AH2 + O2 = (9R)-hydroxy-(10E,12Z)-octadecadienoate + A + H2O. The enzyme catalyses (9Z,12Z)-octadecadienoate + AH2 + O2 = (9S)-hydroxy-(10E,12Z)-octadecadienoate + A + H2O. It catalyses the reaction (9Z,12Z)-octadecadienoate + AH2 + O2 = (13S)-hydroxy-(9Z,11E)-octadecadienoate + A + H2O. It carries out the reaction (9Z,12Z)-octadecadienoate + AH2 + O2 = (13R)-hydroxy-(9Z,11E)-octadecadienoate + A + H2O. Its pathway is lipid metabolism; prostaglandin biosynthesis. The cyclooxygenase activity is inhibited by nonsteroidal anti-inflammatory drugs (NSAIDs) including aspirin, ibuprofen, flurbiprofen, celecoxib, flufenamic, mefenamic and tolfenamic acids as well as by hydroperoxide scavenger erythrocyte glutathione peroxidase GPX1. Aspirin triggers enzyme acetylation turning off its ability to generate pro-inflammatory prostaglandins, but switches on its capacity to produce anti-inflammatory lipid mediators involved in inflammation resolution. Aspirin enhances lipoxygenase-type activity toward production of epimers with R stereochemistry such as 15R-HETE, 18R-HEPE, 15R-HEPE and 17R-HDHA. Atorvastatin, a cholesterol-lowering drug, triggers enzyme S-nitrosylation increasing production of 13-series resolvins (RvTs). Its function is as follows. Dual cyclooxygenase and peroxidase in the biosynthesis pathway of prostanoids, a class of C20 oxylipins mainly derived from arachidonate ((5Z,8Z,11Z,14Z)-eicosatetraenoate, AA, C20:4(n-6)), with a particular role in the inflammatory response. The cyclooxygenase activity oxygenates AA to the hydroperoxy endoperoxide prostaglandin G2 (PGG2), and the peroxidase activity reduces PGG2 to the hydroxy endoperoxide prostaglandin H2 (PGH2), the precursor of all 2-series prostaglandins and thromboxanes. This complex transformation is initiated by abstraction of hydrogen at carbon 13 (with S-stereochemistry), followed by insertion of molecular O2 to form the endoperoxide bridge between carbon 9 and 11 that defines prostaglandins. The insertion of a second molecule of O2 (bis-oxygenase activity) yields a hydroperoxy group in PGG2 that is then reduced to PGH2 by two electrons. Similarly catalyzes successive cyclooxygenation and peroxidation of dihomo-gamma-linoleate (DGLA, C20:3(n-6)) and eicosapentaenoate (EPA, C20:5(n-3)) to corresponding PGH1 and PGH3, the precursors of 1- and 3-series prostaglandins. In an alternative pathway of prostanoid biosynthesis, converts 2-arachidonoyl lysophopholipids to prostanoid lysophopholipids, which are then hydrolyzed by intracellular phospholipases to release free prostanoids. Metabolizes 2-arachidonoyl glycerol yielding the glyceryl ester of PGH2, a process that can contribute to pain response. Generates lipid mediators from n-3 and n-6 polyunsaturated fatty acids (PUFAs) via a lipoxygenase-type mechanism. Oxygenates PUFAs to hydroperoxy compounds and then reduces them to corresponding alcohols. Plays a role in the generation of resolution phase interaction products (resolvins) during both sterile and infectious inflammation. Metabolizes docosahexaenoate (DHA, C22:6(n-3)) to 17R-HDHA, a precursor of the D-series resolvins (RvDs). As a component of the biosynthetic pathway of E-series resolvins (RvEs), converts eicosapentaenoate (EPA, C20:5(n-3)) primarily to 18S-HEPE that is further metabolized by ALOX5 and LTA4H to generate 18S-RvE1 and 18S-RvE2. In vascular endothelial cells, converts docosapentaenoate (DPA, C22:5(n-3)) to 13R-HDPA, a precursor for 13-series resolvins (RvTs) shown to activate macrophage phagocytosis during bacterial infection. In activated leukocytes, contributes to oxygenation of hydroxyeicosatetraenoates (HETE) to diHETES (5,15-diHETE and 5,11-diHETE). Can also use linoleate (LA, (9Z,12Z)-octadecadienoate, C18:2(n-6)) as substrate and produce hydroxyoctadecadienoates (HODEs) in a regio- and stereospecific manner, being (9R)-HODE ((9R)-hydroxy-(10E,12Z)-octadecadienoate) and (13S)-HODE ((13S)-hydroxy-(9Z,11E)-octadecadienoate) its major products. During neuroinflammation, plays a role in neuronal secretion of specialized preresolving mediators (SPMs) 15R-lipoxin A4 that regulates phagocytic microglia. In Homo sapiens (Human), this protein is Prostaglandin G/H synthase 2.